Consider the following 904-residue polypeptide: Pentatricopeptide repeat-containing protein At4g30825, chloroplastic (904 aa).

A chloroplast-targeting transit peptide spans 1–61; that stretch reads MGSLRFSIPL…SSTRVLDKIR (61 aa). The interval 75–94 is disordered; sequence NSASAAPVERSRSSKLSGDQ. 20 PPR repeats span residues 173 to 203, 209 to 243, 244 to 274, 278 to 312, 313 to 347, 348 to 382, 383 to 417, 418 to 452, 487 to 521, 522 to 553, 557 to 591, 592 to 622, 628 to 662, 663 to 697, 698 to 732, 733 to 766, 767 to 801, 802 to 836, 837 to 871, and 872 to 904; these read NFVA…LCGF, SYQV…GVRP, NVAT…MRKF, CESA…RVRL, KLEN…GFSP, NIIA…GLEP, DETS…GYKP, NSFN…GCQY, NQTS…DSAF, ESHL…MESD, NLHI…GVVL, DRIG…MDEQ, DVYL…GIHW, NQEM…GFTP, NTVT…GVVD, VISY…GFSV, SLEA…TSGP, DHYT…GLGP, DLCS…NIIP, and DKVT…QMGI.

It belongs to the PPR family. P subfamily.

Its subcellular location is the plastid. It is found in the chloroplast. The sequence is that of Pentatricopeptide repeat-containing protein At4g30825, chloroplastic from Arabidopsis thaliana (Mouse-ear cress).